Consider the following 406-residue polypeptide: Probable endo-xylogalacturonan hydrolase A (406 aa).

Residues 1–18 form the signal peptide; the sequence is MLYPRNLALFSLLSLSSA. PbH1 repeat units follow at residues 183–213, 214–235, 237–257, and 299–320; these read TQHV…DIGA, STHV…AFKP, SNYV…SVGS, and VKNV…QIES. Aspartate 228 serves as the catalytic Proton donor. Histidine 251 is an active-site residue. N-linked (GlcNAc...) asparagine glycosylation occurs at asparagine 301.

This sequence belongs to the glycosyl hydrolase 28 family.

It localises to the secreted. Functionally, pectinolytic enzyme involved in the degradation of xylogalacturonan (xga), a galacturonan backbone heavily substituted with xylose, and which is one important component of the hairy regions of pectin. Activity requires a galacturonic acid backbone substituted with xylose. This Aspergillus fumigatus (strain CBS 144.89 / FGSC A1163 / CEA10) (Neosartorya fumigata) protein is Probable endo-xylogalacturonan hydrolase A (xghA).